The sequence spans 184 residues: uncharacterized protein (184 aa).

Positions 32 to 52 are disordered; that stretch reads PCPRSRTQGQSRRSETHTISR.

It localises to the mitochondrion. This is an uncharacterized protein from Arabidopsis thaliana (Mouse-ear cress).